The following is a 151-amino-acid chain: Transcriptional repressor NrdR (151 aa).

The tract at residues methionine 1–aspartate 21 is disordered. A zinc finger spans residues cysteine 3–cysteine 34. The segment covering threonine 11–aspartate 21 has biased composition (basic and acidic residues). An ATP-cone domain is found at leucine 49 to aspartate 139.

This sequence belongs to the NrdR family. Zn(2+) serves as cofactor.

Negatively regulates transcription of bacterial ribonucleotide reductase nrd genes and operons by binding to NrdR-boxes. The polypeptide is Transcriptional repressor NrdR (Acidiphilium cryptum (strain JF-5)).